A 431-amino-acid polypeptide reads, in one-letter code: Selenocysteine lyase (431 aa).

Position 239 is an N6-(pyridoxal phosphate)lysine (lysine 239). Cysteine 367 functions as the S-selanylcysteine intermediate in the catalytic mechanism.

The protein belongs to the class-V pyridoxal-phosphate-dependent aminotransferase family. Homodimer. The cofactor is pyridoxal 5'-phosphate.

The protein resides in the cytoplasm. It is found in the cytosol. The enzyme catalyses L-selenocysteine + AH2 = hydrogenselenide + L-alanine + A + H(+). Functionally, catalyzes the decomposition of L-selenocysteine to L-alanine and elemental selenium. This chain is Selenocysteine lyase (scly), found in Xenopus tropicalis (Western clawed frog).